The sequence spans 346 residues: Elongation factor Ts (346 aa).

The segment at 80-83 is involved in Mg(2+) ion dislocation from EF-Tu; it reads TDFV.

The protein belongs to the EF-Ts family.

Its subcellular location is the cytoplasm. In terms of biological role, associates with the EF-Tu.GDP complex and induces the exchange of GDP to GTP. It remains bound to the aminoacyl-tRNA.EF-Tu.GTP complex up to the GTP hydrolysis stage on the ribosome. This chain is Elongation factor Ts, found in Streptococcus agalactiae serotype Ia (strain ATCC 27591 / A909 / CDC SS700).